We begin with the raw amino-acid sequence, 341 residues long: Coiled-coil domain-containing protein 86 (341 aa).

The tract at residues 1 to 341 (MGTPLRRSRR…QPPQRPVAKV (341 aa)) is disordered. Position 18 is a phosphoserine (Ser-18). Over residues 26–49 (EVSRAKRALVDFKSNPEETRELES) the composition is skewed to basic and acidic residues. Phosphoserine is present on Ser-59. A compositionally biased stretch (low complexity) spans 64–73 (PETSPESPCP). Thr-66 is subject to Phosphothreonine. A phosphoserine mark is found at Ser-67, Ser-70, Ser-81, Ser-92, Ser-103, Ser-114, and Ser-124. A compositionally biased stretch (polar residues) spans 105 to 114 (AGQTESNPES). The span at 130–139 (EVAHAKEEVI) shows a compositional bias: basic and acidic residues. Phosphoserine is present on residues Ser-142, Ser-169, Ser-170, and Ser-200. A compositionally biased stretch (basic residues) spans 219–235 (GKPKSGRVWKDRSKKRF). Basic and acidic residues predominate over residues 254–298 (ERQERKLAKDFARHLEEEKQRRRQEKKERRAENLRRRLENERKAE). Residues 261 to 304 (AKDFARHLEEEKQRRRQEKKERRAENLRRRLENERKAEIVQVIR) are a coiled coil. The segment covering 307-317 (AKLKKAKKKQL) has biased composition (basic residues). At Arg-323 the chain carries Citrulline.

Post-translationally, citrullinated by PADI4.

It is found in the nucleus. Its subcellular location is the chromosome. It localises to the nucleolus. Required for proper chromosome segregation during mitosis and error-free mitotic progression. The sequence is that of Coiled-coil domain-containing protein 86 from Rattus norvegicus (Rat).